A 207-amino-acid chain; its full sequence is Frataxin, mitochondrial (207 aa).

The N-terminal 40 residues, 1 to 40 (MWAFGGRAAVGLLPRTASRASAWVGNPRWREPIVTCGRRG), are a transit peptide targeting the mitochondrion.

Belongs to the frataxin family. As to quaternary structure, component of the mitochondrial core iron-sulfur cluster (ISC) complex composed of NFS1, LYRM4, NDUFAB1, ISCU, FXN, and FDX2; this complex is a heterohexamer containing two copies of each monomer. Homodimer. Monomer (probable predominant form). Oligomer. Monomers and polymeric aggregates of &gt;1 MDa have been isolated from mitochondria. A small fraction of heterologous overexpressed recombinant frataxin forms high-molecular weight aggregates that incorporate iron. Interacts with LYRM4. Interacts (via ferrous form) with ISCU; the interaction is possible when both are bound to the dimeric form of the cysteine desulfurase complex (NFS1:LYRM4) and the interaction enhances FXN interaction to the dimeric form of the cysteine desulfurase complex (NFS1:LYRM4). Interacts with FECH; one iron-bound FXN monomer seems to interact with a FECH homodimer. Interacts with SDHA and SDHB. Interacts with ACO2; the interaction is dependent on citrate. Interacts with HSPA9. Component of a complex composed of FXN, NFS1, LYRM4 and ISCU. In terms of assembly, interacts with ACO1. Interacts with ISCU (cytoplasmic form). Post-translationally, processed in two steps by mitochondrial processing peptidase (MPP). MPP first cleaves the precursor to intermediate form and subsequently converts the intermediate to yield frataxin mature form (frataxin(81-210)) which is the predominant form. The additional forms, frataxin(56-210) and frataxin(78-210), seem to be produced when the normal maturation process is impaired; their physiological relevance is unsure. Heart, liver, skeletal muscle, kidney, spleen and thymus. Weakly expressed in the brain and lung.

The protein resides in the mitochondrion. Its subcellular location is the cytoplasm. It localises to the cytosol. It carries out the reaction 4 Fe(2+) + O2 + 4 H(+) = 4 Fe(3+) + 2 H2O. Functionally, functions as an activator of persulfide transfer to the scaffoding protein ISCU as component of the core iron-sulfur cluster (ISC) assembly complex and participates to the [2Fe-2S] cluster assembly. Accelerates sulfur transfer from NFS1 persulfide intermediate to ISCU and to small thiols such as L-cysteine and glutathione leading to persulfuration of these thiols and ultimately sulfide release. Binds ferrous ion and is released from FXN upon the addition of both L-cysteine and reduced FDX2 during [2Fe-2S] cluster assembly. The core iron-sulfur cluster (ISC) assembly complex is involved in the de novo synthesis of a [2Fe-2S] cluster, the first step of the mitochondrial iron-sulfur protein biogenesis. This process is initiated by the cysteine desulfurase complex (NFS1:LYRM4:NDUFAB1) that produces persulfide which is delivered on the scaffold protein ISCU in a FXN-dependent manner. Then this complex is stabilized by FDX2 which provides reducing equivalents to accomplish the [2Fe-2S] cluster assembly. Finally, the [2Fe-2S] cluster is transferred from ISCU to chaperone proteins, including HSCB, HSPA9 and GLRX5. May play a role in the protection against iron-catalyzed oxidative stress through its ability to catalyze the oxidation of Fe(2+) to Fe(3+); the oligomeric form but not the monomeric form has in vitro ferroxidase activity. May be able to store large amounts of iron in the form of a ferrihydrite mineral by oligomerization; however, the physiological relevance is unsure as reports are conflicting and the function has only been shown using heterologous overexpression systems. May function as an iron chaperone protein that protects the aconitase [4Fe-4S]2+ cluster from disassembly and promotes enzyme reactivation. May play a role as a high affinity iron binding partner for FECH that is capable of both delivering iron to ferrochelatase and mediating the terminal step in mitochondrial heme biosynthesis. Its function is as follows. Modulates the RNA-binding activity of ACO1. May be involved in the cytoplasmic iron-sulfur protein biogenesis. May contribute to oxidative stress resistance and overall cell survival. The protein is Frataxin, mitochondrial of Mus musculus (Mouse).